Reading from the N-terminus, the 209-residue chain is Small ribosomal subunit protein uS4 (209 aa).

An S4 RNA-binding domain is found at 98-166; sequence RRLDNVVYRL…IKQAIELNKG (69 aa).

This sequence belongs to the universal ribosomal protein uS4 family. As to quaternary structure, part of the 30S ribosomal subunit. Contacts protein S5. The interaction surface between S4 and S5 is involved in control of translational fidelity.

In terms of biological role, one of the primary rRNA binding proteins, it binds directly to 16S rRNA where it nucleates assembly of the body of the 30S subunit. Its function is as follows. With S5 and S12 plays an important role in translational accuracy. The chain is Small ribosomal subunit protein uS4 from Fervidobacterium nodosum (strain ATCC 35602 / DSM 5306 / Rt17-B1).